A 1303-amino-acid chain; its full sequence is D-lysergyl-peptide-synthetase subunit 2 (1303 aa).

The adenylation (A) domain stretch occupies residues 256–653; it reads EWCRWTPSAV…CRKSTQVKLR (398 aa). The Carrier domain occupies 793-869; that stretch reads APSNDIEEAF…ELARHTKLVA (77 aa). An O-(pantetheine 4'-phosphoryl)serine modification is found at Ser830. A condensation (C) domain region spans residues 905–1294; that stretch reads EDVYPCTPLQ…HAAPRTLIGD (390 aa).

Belongs to the NRP synthetase family.

Its pathway is alkaloid biosynthesis; ergot alkaloid biosynthesis. Functionally, D-lysergyl-peptide-synthetase subunit 2; part of the gene cluster that mediates the biosynthesis of fungal ergot alkaloid. DmaW catalyzes the first step of ergot alkaloid biosynthesis by condensing dimethylallyl diphosphate (DMAP) and tryptophan to form 4-dimethylallyl-L-tryptophan. The second step is catalyzed by the methyltransferase easF that methylates 4-dimethylallyl-L-tryptophan in the presence of S-adenosyl-L-methionine, resulting in the formation of 4-dimethylallyl-L-abrine. The catalase easC and the FAD-dependent oxidoreductase easE then transform 4-dimethylallyl-L-abrine to chanoclavine-I which is further oxidized by easD in the presence of NAD(+), resulting in the formation of chanoclavine-I aldehyde. Agroclavine dehydrogenase easG then mediates the conversion of chanoclavine-I aldehyde to agroclavine via a non-enzymatic adduct reaction: the substrate is an iminium intermediate that is formed spontaneously from chanoclavine-I aldehyde in the presence of glutathione. The presence of easA is not required to complete this reaction. Further conversion of agroclavine to paspalic acid is a two-step process involving oxidation of agroclavine to elymoclavine and of elymoclavine to paspalic acid, the second step being performed by the elymoclavine oxidase cloA. Paspalic acid is then further converted to D-lysergic acid. Ergopeptines are assembled from D-lysergic acid and three different amino acids by the D-lysergyl-peptide-synthetases composed each of a monomudular and a trimodular nonribosomal peptide synthetase subunit. LpsB and lpsC encode the monomodular subunits responsible for D-lysergic acid activation and incorporation into the ergopeptine backbone. LpsA1 and A2 subunits encode the trimodular nonribosomal peptide synthetase assembling the tripeptide portion of ergopeptines. LpsA1 is responsible for formation of the major ergopeptine, ergotamine, and lpsA2 for alpha-ergocryptine, the minor ergopeptine of the total alkaloid mixture elaborated by C.purpurea. D-lysergyl-tripeptides are assembled by the nonribosomal peptide synthetases and released as N-(D-lysergyl-aminoacyl)-lactams. Cyclolization of the D-lysergyl-tripeptides is performed by the Fe(2+)/2-ketoglutarate-dependent dioxygenase easH which introduces a hydroxyl group into N-(D-lysergyl-aminoacyl)-lactam at alpha-C of the aminoacyl residue followed by spontaneous condensation with the terminal lactam carbonyl group. This Claviceps purpurea (strain 20.1) (Ergot fungus) protein is D-lysergyl-peptide-synthetase subunit 2.